We begin with the raw amino-acid sequence, 597 residues long: LGASRLGPSPGCLAVASAAKLGSVYTEGGFVEGVNKKLSLFGDSIDIFKGIPFAAAPKALEKPERHPGWQGTLKAKSFKKRCLQATLTQDSTYGNEDCLYLNIWVPQGRKEVSHDLPVMIWIYGGAFLMGASQGANFLSNYLYDGEEIATRGNVIVVTFNYRVGPLGFLSTGDSNLPGNYGLWDQHMAIAWVKRNIEAFGGDPDNITLFGESAGGASVSLQTLSPYNKGLIKRAISQSGVGLCPWAIQQDPLFWAKRIAEKVGCPVDDTSKMAGCLKITDPRALTLAYKLPLGSTEYPKLHYLSFVPVIDGDFIPDDPVNLYANAADVDYIAGTNDMDGHLFVGMDVPAINSNKQDVTEEDFYKLVSGLTVTKGLRGANATYEVYTEPWAQDSSQETRKKTMVDLETDILFLIPTKIAVAQHKSHAKSANTYTYLFSQPSRMPIYPKWMGADHADDLQYVFGKPFATPLGYRAQDRTVSKAMIAYWTNFARTGDPNTGHSTVPANWDPYTLEDDNYLEINKQMDSNSMKLHLRTNYLQFWTQTYQALPTVTSAGASLLPPEDNSQASPVPPADNSGAPTEPSAGDSEVAQMPVVIGF.

The N-terminal stretch at 1-18 (LGASRLGPSPGCLAVASA) is a signal peptide. Cys-82 and Cys-98 form a disulfide bridge. An N-linked (GlcNAc...) asparagine glycan is attached at Asn-205. The Acyl-ester intermediate role is filled by Ser-212. An intrachain disulfide couples Cys-264 to Cys-275. Asp-338 serves as the catalytic Charge relay system. Asn-379 carries an N-linked (GlcNAc...) asparagine glycan. Catalysis depends on His-453, which acts as the Charge relay system. The interval 553-591 (AGASLLPPEDNSQASPVPPADNSGAPTEPSAGDSEVAQM) is disordered.

Belongs to the type-B carboxylesterase/lipase family. As to quaternary structure, interacts with CLC.

It localises to the secreted. It carries out the reaction a triacylglycerol + H2O = a diacylglycerol + a fatty acid + H(+). The catalysed reaction is 1,2,3-tri-(9Z-octadecenoyl)-glycerol + H2O = di-(9Z)-octadecenoylglycerol + (9Z)-octadecenoate + H(+). It catalyses the reaction 1,2,3-trioctanoylglycerol + H2O = dioctanoylglycerol + octanoate + H(+). The enzyme catalyses a sterol ester + H2O = a sterol + a fatty acid + H(+). It carries out the reaction cholesteryl (9Z-octadecenoate) + H2O = cholesterol + (9Z)-octadecenoate + H(+). The catalysed reaction is an acetyl ester + H2O = an aliphatic alcohol + acetate + H(+). It catalyses the reaction a butanoate ester + H2O = an aliphatic alcohol + butanoate + H(+). The enzyme catalyses 9-hexadecanoyloxy-octadecanoate + H2O = 9-hydroxy-octadecanoate + hexadecanoate + H(+). It carries out the reaction 9-(9Z-octadecenoyloxy)-octadecanoate + H2O = 9-hydroxy-octadecanoate + (9Z)-octadecenoate + H(+). The catalysed reaction is 1-hexadecanoyl-sn-glycero-3-phosphocholine + H2O = sn-glycerol 3-phosphocholine + hexadecanoate + H(+). It catalyses the reaction 12-hexadecanoyloxy-octadecanoate + H2O = 12-hydroxyoctadecanoate + hexadecanoate + H(+). The enzyme catalyses 12-(9Z-octadecenoyloxy)-octadecanoate + H2O = 12-hydroxyoctadecanoate + (9Z)-octadecenoate + H(+). It carries out the reaction 13-(9Z-octadecenoyloxy)-octadecanoate + H2O = 13-hydroxy-octadecanoate + (9Z)-octadecenoate + H(+). The catalysed reaction is 9-(9Z-hexadecenoyloxy)-octadecanoate + H2O = (9Z)-hexadecenoate + 9-hydroxy-octadecanoate + H(+). It catalyses the reaction 12-(9Z-hexadecenoyloxy)-octadecanoate + H2O = 12-hydroxyoctadecanoate + (9Z)-hexadecenoate + H(+). The enzyme catalyses 13-(9Z-hexadecenoyloxy)-octadecanoate + H2O = 13-hydroxy-octadecanoate + (9Z)-hexadecenoate + H(+). It carries out the reaction 12-octadecanoyloxy-octadecanoate + H2O = 12-hydroxyoctadecanoate + octadecanoate + H(+). The catalysed reaction is 13-octadecanoyloxy-octadecanoate + H2O = 13-hydroxy-octadecanoate + octadecanoate + H(+). It catalyses the reaction 5-(9Z-hexadecenoyloxy)-octadecanoate + H2O = 5-hydroxy-octadecanoate + (9Z)-hexadecenoate + H(+). The enzyme catalyses 9-octadecanoyloxy-octadecanoate + H2O = 9-hydroxy-octadecanoate + octadecanoate + H(+). Its activity is regulated as follows. Activated by bile salts such as sodium taurocholate. Catalyzes the hydrolysis of a wide range of substrates including cholesteryl esters, phospholipids, lysophospholipids, di- and tri-acylglycerols, and fatty acid esters of hydroxy fatty acids (FAHFA). Preferentially hydrolyzes FAHFAs with the ester bond further away from the carboxylate. Unsaturated FAHFAs are hydrolyzed more quickly than saturated FAHFAs. Has an essential role in the complete digestion of dietary lipids and their intestinal absorption, along with the absorption of fat-soluble vitamins. The chain is Bile salt-activated lipase (CEL) from Bos taurus (Bovine).